The following is a 712-amino-acid chain: Polyribonucleotide nucleotidyltransferase (712 aa).

Residues Asp-487 and Asp-493 each contribute to the Mg(2+) site. In terms of domain architecture, KH spans 554–613 (PKILTMQINPEKIREVIGPSGKQINKIIDETGVKIDIEQDGTIFISSVNEAMNQKAKQII). Residues 623–691 (GQIYLGKVKR…KQGRVNLSRK (69 aa)) enclose the S1 motif domain.

This sequence belongs to the polyribonucleotide nucleotidyltransferase family. Mg(2+) serves as cofactor.

Its subcellular location is the cytoplasm. The enzyme catalyses RNA(n+1) + phosphate = RNA(n) + a ribonucleoside 5'-diphosphate. In terms of biological role, involved in mRNA degradation. Catalyzes the phosphorolysis of single-stranded polyribonucleotides processively in the 3'- to 5'-direction. The chain is Polyribonucleotide nucleotidyltransferase from Geobacillus sp. (strain WCH70).